The sequence spans 251 residues: Ditrans,polycis-undecaprenyl-diphosphate synthase ((2E,6E)-farnesyl-diphosphate specific) (251 aa).

Residue aspartate 26 is part of the active site. Aspartate 26 is a binding site for Mg(2+). Substrate is bound by residues glycine 27–arginine 30, tryptophan 31, arginine 39, histidine 43, and serine 71–glutamate 73. Residue asparagine 74 is the Proton acceptor of the active site. Residues tryptophan 75, arginine 77, arginine 194, and arginine 200–serine 202 contribute to the substrate site. Glutamate 213 is a binding site for Mg(2+).

The protein belongs to the UPP synthase family. As to quaternary structure, homodimer. The cofactor is Mg(2+).

The enzyme catalyses 8 isopentenyl diphosphate + (2E,6E)-farnesyl diphosphate = di-trans,octa-cis-undecaprenyl diphosphate + 8 diphosphate. Its function is as follows. Catalyzes the sequential condensation of isopentenyl diphosphate (IPP) with (2E,6E)-farnesyl diphosphate (E,E-FPP) to yield (2Z,6Z,10Z,14Z,18Z,22Z,26Z,30Z,34E,38E)-undecaprenyl diphosphate (di-trans,octa-cis-UPP). UPP is the precursor of glycosyl carrier lipid in the biosynthesis of bacterial cell wall polysaccharide components such as peptidoglycan and lipopolysaccharide. The sequence is that of Ditrans,polycis-undecaprenyl-diphosphate synthase ((2E,6E)-farnesyl-diphosphate specific) from Buchnera aphidicola subsp. Acyrthosiphon pisum (strain APS) (Acyrthosiphon pisum symbiotic bacterium).